A 237-amino-acid polypeptide reads, in one-letter code: 4-hydroxy-tetrahydrodipicolinate reductase (237 aa).

Residues 11–16, 92–94, and 116–119 contribute to the NAD(+) site; these read GASGRM, GTT, and GSNF. H148 acts as the Proton donor/acceptor in catalysis. H149 contributes to the (S)-2,3,4,5-tetrahydrodipicolinate binding site. The active-site Proton donor is the K152. 158–159 is a (S)-2,3,4,5-tetrahydrodipicolinate binding site; sequence GS.

Belongs to the DapB family.

Its subcellular location is the cytoplasm. The enzyme catalyses (S)-2,3,4,5-tetrahydrodipicolinate + NAD(+) + H2O = (2S,4S)-4-hydroxy-2,3,4,5-tetrahydrodipicolinate + NADH + H(+). It catalyses the reaction (S)-2,3,4,5-tetrahydrodipicolinate + NADP(+) + H2O = (2S,4S)-4-hydroxy-2,3,4,5-tetrahydrodipicolinate + NADPH + H(+). Its pathway is amino-acid biosynthesis; L-lysine biosynthesis via DAP pathway; (S)-tetrahydrodipicolinate from L-aspartate: step 4/4. Functionally, catalyzes the conversion of 4-hydroxy-tetrahydrodipicolinate (HTPA) to tetrahydrodipicolinate. The protein is 4-hydroxy-tetrahydrodipicolinate reductase of Xylella fastidiosa (strain 9a5c).